A 431-amino-acid polypeptide reads, in one-letter code: MANVVIVGAQWGDEGKGKVVDIYTEHADDVVRFQGGNNAGHTLVVGEETTILHLIPSGILHEGKRCIIGNGVVLDPKVFLEEIGQLKKKGYLKDDKQLVIDGNAHIIMPYHKALDIAREQKSGARKIGTTGRGIGPTYEDKVARRGIRVMDLVHPDTFVRKVKEMLPEKNFYLEQYLGGEPLSEEAIVEEYSVYARELAKYVDRASLLLNRSIAEGRNVLFEGAQGALLDIDHGTYPYVTSSSTVAGGACTGSGVGPTVIDEVVGIVKAYVTRVGEGPFPTELHDEMGEKLRSEGHEFGSTTGRPRRTGWFDAVAMREAVRISGMTGLALTKMDVLNGLDTINVCTAYSYQGELLEDFPHDLDILKECKPVYEQVEGWQVDLEGATSFETLPPKAQAYLRKIEEVSGCPVVLVSIGPRRDQTIQLKNPFDK.

Residues 12–18 (GDEGKGK) and 40–42 (GHT) each bind GTP. The Proton acceptor role is filled by Asp-13. Mg(2+)-binding residues include Asp-13 and Gly-40. Residues 13-16 (DEGK), 38-41 (NAGH), Thr-130, Arg-144, Gln-225, Thr-240, and Arg-304 each bind IMP. His-41 serves as the catalytic Proton donor. 300–306 (STTGRPR) is a binding site for substrate. Residues Arg-306, 332–334 (KMD), and 414–416 (SIG) contribute to the GTP site.

This sequence belongs to the adenylosuccinate synthetase family. In terms of assembly, homodimer. It depends on Mg(2+) as a cofactor.

It localises to the cytoplasm. The catalysed reaction is IMP + L-aspartate + GTP = N(6)-(1,2-dicarboxyethyl)-AMP + GDP + phosphate + 2 H(+). It participates in purine metabolism; AMP biosynthesis via de novo pathway; AMP from IMP: step 1/2. Plays an important role in the de novo pathway of purine nucleotide biosynthesis. Catalyzes the first committed step in the biosynthesis of AMP from IMP. This Syntrophotalea carbinolica (strain DSM 2380 / NBRC 103641 / GraBd1) (Pelobacter carbinolicus) protein is Adenylosuccinate synthetase.